Here is a 350-residue protein sequence, read N- to C-terminus: UDP-3-O-acylglucosamine N-acyltransferase (350 aa).

H251 (proton acceptor) is an active-site residue.

It belongs to the transferase hexapeptide repeat family. LpxD subfamily. Homotrimer.

It carries out the reaction a UDP-3-O-[(3R)-3-hydroxyacyl]-alpha-D-glucosamine + a (3R)-hydroxyacyl-[ACP] = a UDP-2-N,3-O-bis[(3R)-3-hydroxyacyl]-alpha-D-glucosamine + holo-[ACP] + H(+). The protein operates within bacterial outer membrane biogenesis; LPS lipid A biosynthesis. Catalyzes the N-acylation of UDP-3-O-acylglucosamine using 3-hydroxyacyl-ACP as the acyl donor. Is involved in the biosynthesis of lipid A, a phosphorylated glycolipid that anchors the lipopolysaccharide to the outer membrane of the cell. In Prochlorococcus marinus (strain NATL2A), this protein is UDP-3-O-acylglucosamine N-acyltransferase.